A 511-amino-acid chain; its full sequence is Maturase K (511 aa).

Belongs to the intron maturase 2 family. MatK subfamily.

Its subcellular location is the plastid. It is found in the chloroplast. Its function is as follows. Usually encoded in the trnK tRNA gene intron. Probably assists in splicing its own and other chloroplast group II introns. This chain is Maturase K, found in Diplacus aurantiacus (Orange bush monkey flower).